The sequence spans 264 residues: Zinc import ATP-binding protein ZnuC (264 aa).

One can recognise an ABC transporter domain in the interval 11-226 (IELKGVNVTF…PVFIRFFGNQ (216 aa)). Position 43 to 50 (43 to 50 (GPNGGGKS)) interacts with ATP.

The protein belongs to the ABC transporter superfamily. Zinc importer (TC 3.A.1.15.5) family. In terms of assembly, the complex is composed of two ATP-binding proteins (ZnuC), two transmembrane proteins (ZnuB) and a solute-binding protein (ZnuA).

It is found in the cell inner membrane. It catalyses the reaction Zn(2+)(out) + ATP(in) + H2O(in) = Zn(2+)(in) + ADP(in) + phosphate(in) + H(+)(in). In terms of biological role, part of the ABC transporter complex ZnuABC involved in zinc import. Responsible for energy coupling to the transport system. This is Zinc import ATP-binding protein ZnuC from Histophilus somni (strain 129Pt) (Haemophilus somnus).